The primary structure comprises 394 residues: Chorismate synthase (394 aa).

Residue Arg48 coordinates NADP(+). Positions 52–90 (QSMITTSRGEPDEVSIQSGLQDGYTTGTPIGMTIENKDA) are disordered. A compositionally biased stretch (polar residues) spans 66–79 (SIQSGLQDGYTTGT). FMN contacts are provided by residues 125–127 (RSS), Gly297, 312–316 (HAPTS), and Arg339.

The protein belongs to the chorismate synthase family. Requires FMNH2 as cofactor.

It catalyses the reaction 5-O-(1-carboxyvinyl)-3-phosphoshikimate = chorismate + phosphate. The protein operates within metabolic intermediate biosynthesis; chorismate biosynthesis; chorismate from D-erythrose 4-phosphate and phosphoenolpyruvate: step 7/7. In terms of biological role, catalyzes the anti-1,4-elimination of the C-3 phosphate and the C-6 proR hydrogen from 5-enolpyruvylshikimate-3-phosphate (EPSP) to yield chorismate, which is the branch point compound that serves as the starting substrate for the three terminal pathways of aromatic amino acid biosynthesis. This reaction introduces a second double bond into the aromatic ring system. The chain is Chorismate synthase from Halobacterium salinarum (strain ATCC 700922 / JCM 11081 / NRC-1) (Halobacterium halobium).